The sequence spans 205 residues: Quinone-oxidoreductase QR2 (205 aa).

In terms of domain architecture, Flavodoxin-like spans 5–192 (VYIVYYSTYG…LKQAFHQGMY (188 aa)). FMN is bound by residues 11–15 (STYGH), 112–165 (IFFS…SPYG), and H136. Y13 provides a ligand contact to NAD(+).

It belongs to the WrbA family. FMN serves as cofactor.

The catalysed reaction is a quinone + NADH + H(+) = a quinol + NAD(+). The enzyme catalyses a quinone + NADPH + H(+) = a quinol + NADP(+). Inhibited by dicumarol. In terms of biological role, NAD(P)H:quinone oxidoreductase reducing quinones by a two-electron transfer mechanism. Can use either NADPH or NADH as electron donor. Can use menadione, 5-hydroxy-1,4-naphthoquinone (juglone) and 2,6-dimethoxy-p-benzoquinone (DMBQ) as substrates. Mitigates the toxicity of exogenous quinones in the rhizosphere. The polypeptide is Quinone-oxidoreductase QR2 (Triphysaria versicolor (Yellow owl's clover)).